The primary structure comprises 211 residues: MTKVLFITANPNSAEGSFGMAVGEAFIEAYKNEHPQDEVVTIDLFNTTVPAIDADVFAAWGKFAAGEGFETLTEAQQQKVAAMNTNLETFMNADRYVFVTPMWNFSYPPVVKAYLDNVAIAGKTFKYTENGPVGLLEGKKALHIQATGGVYSEGAYAAVDFGRNHLKTVLGFVGVNDTEYIAVEGMNANPEKAQEIKEAAIANARELAKRF.

Position 102 to 105 (102 to 105 (MWNF)) interacts with FMN.

Belongs to the azoreductase type 1 family. Homodimer. FMN is required as a cofactor.

The enzyme catalyses 2 a quinone + NADH + H(+) = 2 a 1,4-benzosemiquinone + NAD(+). It carries out the reaction N,N-dimethyl-1,4-phenylenediamine + anthranilate + 2 NAD(+) = 2-(4-dimethylaminophenyl)diazenylbenzoate + 2 NADH + 2 H(+). In terms of biological role, quinone reductase that provides resistance to thiol-specific stress caused by electrophilic quinones. Functionally, also exhibits azoreductase activity. Catalyzes the reductive cleavage of the azo bond in aromatic azo compounds to the corresponding amines. The protein is FMN-dependent NADH:quinone oxidoreductase 3 of Bacillus cereus (strain ZK / E33L).